Consider the following 305-residue polypeptide: UPF0282 protein Pisl_0021 (305 aa).

It belongs to the UPF0282 family.

This chain is UPF0282 protein Pisl_0021, found in Pyrobaculum islandicum (strain DSM 4184 / JCM 9189 / GEO3).